Reading from the N-terminus, the 197-residue chain is Large ribosomal subunit protein bL9 (197 aa).

The segment at 178 to 197 (GEFFDPEAQEDEAAAGETAQ) is disordered. Residues 181-191 (FDPEAQEDEAA) show a composition bias toward acidic residues.

It belongs to the bacterial ribosomal protein bL9 family.

Functionally, binds to the 23S rRNA. The polypeptide is Large ribosomal subunit protein bL9 (Bradyrhizobium sp. (strain BTAi1 / ATCC BAA-1182)).